Consider the following 321-residue polypeptide: Probable arabinan endo-1,5-alpha-L-arabinosidase A (321 aa).

A signal peptide spans 1–19 (MYRLLSVASVPLLASLVHG). Asp-34 acts as the Proton acceptor in catalysis. Glu-200 (proton donor) is an active-site residue. A glycan (N-linked (GlcNAc...) asparagine) is linked at Asn-295.

Belongs to the glycosyl hydrolase 43 family.

It is found in the secreted. It catalyses the reaction Endohydrolysis of (1-&gt;5)-alpha-arabinofuranosidic linkages in (1-&gt;5)-arabinans.. It participates in glycan metabolism; L-arabinan degradation. In terms of biological role, endo-1,5-alpha-L-arabinanase involved in degradation of pectin. Its preferred substrate is linear 1,5-alpha-L-arabinan. This Aspergillus niger (strain ATCC MYA-4892 / CBS 513.88 / FGSC A1513) protein is Probable arabinan endo-1,5-alpha-L-arabinosidase A (abnA).